A 238-amino-acid chain; its full sequence is Lactate utilization protein A (238 aa).

It belongs to the LutA/YkgE family.

Its function is as follows. Is involved in L-lactate degradation and allows cells to grow with lactate as the sole carbon source. This is Lactate utilization protein A from Bacillus licheniformis (strain ATCC 14580 / DSM 13 / JCM 2505 / CCUG 7422 / NBRC 12200 / NCIMB 9375 / NCTC 10341 / NRRL NRS-1264 / Gibson 46).